Reading from the N-terminus, the 339-residue chain is Glyceraldehyde-3-phosphate dehydrogenase (339 aa).

Residues 12–13 (RI), Asp-34, Arg-78, and Thr-120 each bind NAD(+). D-glyceraldehyde 3-phosphate is bound by residues 149–151 (SCT), Thr-180, 209–210 (TG), and Arg-232. The active-site Nucleophile is the Cys-150. Asn-319 serves as a coordination point for NAD(+).

Belongs to the glyceraldehyde-3-phosphate dehydrogenase family. Homotetramer.

The protein resides in the cytoplasm. The catalysed reaction is D-glyceraldehyde 3-phosphate + phosphate + NAD(+) = (2R)-3-phospho-glyceroyl phosphate + NADH + H(+). It participates in carbohydrate degradation; glycolysis; pyruvate from D-glyceraldehyde 3-phosphate: step 1/5. Catalyzes the oxidative phosphorylation of glyceraldehyde 3-phosphate (G3P) to 1,3-bisphosphoglycerate (BPG) using the cofactor NAD. The first reaction step involves the formation of a hemiacetal intermediate between G3P and a cysteine residue, and this hemiacetal intermediate is then oxidized to a thioester, with concomitant reduction of NAD to NADH. The reduced NADH is then exchanged with the second NAD, and the thioester is attacked by a nucleophilic inorganic phosphate to produce BPG. This Haemophilus influenzae (strain ATCC 51907 / DSM 11121 / KW20 / Rd) protein is Glyceraldehyde-3-phosphate dehydrogenase (gapA).